Here is a 439-residue protein sequence, read N- to C-terminus: Serine/threonine-protein kinase 2 (439 aa).

The Protein kinase domain occupies 87–439; it reads NDDFYHISTG…IFSDWINGGN (353 aa). ATP contacts are provided by residues 93 to 101 and lysine 117; that span reads ISTGGYGIV. Aspartate 307 acts as the Proton acceptor in catalysis.

It belongs to the protein kinase superfamily. Ser/Thr protein kinase family. Poxviruses subfamily. Phosphorylated in vivo. Autophosphorylated in vitro.

The protein resides in the host endoplasmic reticulum. The protein localises to the host endoplasmic reticulum-Golgi intermediate compartment. The catalysed reaction is L-seryl-[protein] + ATP = O-phospho-L-seryl-[protein] + ADP + H(+). It carries out the reaction L-threonyl-[protein] + ATP = O-phospho-L-threonyl-[protein] + ADP + H(+). Functionally, essential serine-protein kinase involved in the early stage of virion morphogenesis. The sequence is that of Serine/threonine-protein kinase 2 (OPG054) from Vaccinia virus (strain Ankara) (VACV).